The primary structure comprises 400 residues: Queuine tRNA-ribosyltransferase catalytic subunit (400 aa).

Catalysis depends on aspartate 89, which acts as the Proton acceptor. Residues 89-93, aspartate 143, glutamine 185, and glycine 212 each bind substrate; that span reads DSGGF. The tract at residues 243–249 is RNA binding; sequence GVGFPVD. Aspartate 262 acts as the Nucleophile in catalysis. Positions 267-271 are RNA binding; important for wobble base 34 recognition; it reads TRTAR. Residues cysteine 301, cysteine 303, cysteine 306, and histidine 331 each contribute to the Zn(2+) site.

It belongs to the queuine tRNA-ribosyltransferase family. Heterodimer of a catalytic subunit and an accessory subunit. Zn(2+) serves as cofactor.

Its subcellular location is the cytoplasm. It carries out the reaction guanosine(34) in tRNA + queuine = queuosine(34) in tRNA + guanine. In terms of biological role, catalytic subunit of the queuine tRNA-ribosyltransferase (TGT) that catalyzes the base-exchange of a guanine (G) residue with queuine (Q) at position 34 (anticodon wobble position) in tRNAs with GU(N) anticodons (tRNA-Asp, -Asn, -His and -Tyr), resulting in the hypermodified nucleoside queuosine (7-(((4,5-cis-dihydroxy-2-cyclopenten-1-yl)amino)methyl)-7-deazaguanosine). Catalysis occurs through a double-displacement mechanism. The nucleophile active site attacks the C1' of nucleotide 34 to detach the guanine base from the RNA, forming a covalent enzyme-RNA intermediate. The proton acceptor active site deprotonates the incoming queuine, allowing a nucleophilic attack on the C1' of the ribose to form the product. This Caenorhabditis elegans protein is Queuine tRNA-ribosyltransferase catalytic subunit.